The primary structure comprises 380 residues: Cytochrome b (380 aa).

4 helical membrane-spanning segments follow: residues Phe34 to Met54, Trp78 to Ile99, Trp114 to Leu134, and Phe179 to Thr199. Residues His84 and His98 each contribute to the heme b site. Heme b contacts are provided by His183 and His197. Residue His202 coordinates a ubiquinone. The next 4 helical transmembrane spans lie at Leu227 to Ser247, Leu289 to His309, Leu321 to Ser341, and Phe348 to Pro368.

It belongs to the cytochrome b family. The cytochrome bc1 complex contains 11 subunits: 3 respiratory subunits (MT-CYB, CYC1 and UQCRFS1), 2 core proteins (UQCRC1 and UQCRC2) and 6 low-molecular weight proteins (UQCRH/QCR6, UQCRB/QCR7, UQCRQ/QCR8, UQCR10/QCR9, UQCR11/QCR10 and a cleavage product of UQCRFS1). This cytochrome bc1 complex then forms a dimer. The cofactor is heme b.

The protein localises to the mitochondrion inner membrane. Functionally, component of the ubiquinol-cytochrome c reductase complex (complex III or cytochrome b-c1 complex) that is part of the mitochondrial respiratory chain. The b-c1 complex mediates electron transfer from ubiquinol to cytochrome c. Contributes to the generation of a proton gradient across the mitochondrial membrane that is then used for ATP synthesis. In Pelagodroma marina (White-faced storm-petrel), this protein is Cytochrome b (MT-CYB).